A 1157-amino-acid chain; its full sequence is uncharacterized protein (1157 aa).

Basic and acidic residues predominate over residues 1 to 10 (MDPHWKRHDS). Disordered regions lie at residues 1–35 (MDPHWKRHDSSNIPTQPSPSASPKSNKPSSAQRFG), 159–233 (QTTP…SVEP), and 478–498 (KNQSSHRRNSSTSSGETGKGP). Composition is skewed to low complexity over residues 18-31 (SPSASPKSNKPSSA) and 181-197 (SAGTDPFSPVSPSNPNF). Residues 208–228 (QEWQQSPLESPLSMHSLQESL) show a composition bias toward polar residues. Residues 501-574 (VWFKPSDKRI…KVEYKAILHD (74 aa)) enclose the CSD2 domain. One can recognise an RNB domain in the interval 608 to 921 (LRDKLTFMIG…ICVQRQLREA (314 aa)). The DIS3L2 C-terminal domain maps to 973–1030 (GLVKHKAFVLAVDQEYIDIVIYEFGLERRISLDLLPLSNCDFNEQKHELYLSWRTNAS). Residues 1084–1113 (YSKARGNDSTSKTAKSSSGNQDISGDGKLH) are disordered. Over residues 1090–1106 (NDSTSKTAKSSSGNQDI) the composition is skewed to polar residues.

It belongs to the RNR ribonuclease family.

The protein localises to the cytoplasm. This is an uncharacterized protein from Schizosaccharomyces pombe (strain 972 / ATCC 24843) (Fission yeast).